The chain runs to 711 residues: Polyribonucleotide nucleotidyltransferase (711 aa).

Residues aspartate 486 and aspartate 492 each coordinate Mg(2+). The KH domain maps to 553–612 (PRIHTIKISTDKIKDVIGKGGSVIRALTEETGTTIEIEDDGTVKIAATDGEKAKYAIRRI). In terms of domain architecture, S1 motif spans 622 to 690 (GRIYNSKVTR…RQGRVRLSIK (69 aa)). The disordered stretch occupies residues 689–711 (IKEATEQSQPAAAPEAPASEQAE). Residues 694 to 711 (EQSQPAAAPEAPASEQAE) are compositionally biased toward low complexity.

It belongs to the polyribonucleotide nucleotidyltransferase family. In terms of assembly, component of the RNA degradosome, which is a multiprotein complex involved in RNA processing and mRNA degradation. The cofactor is Mg(2+).

The protein resides in the cytoplasm. It catalyses the reaction RNA(n+1) + phosphate = RNA(n) + a ribonucleoside 5'-diphosphate. Involved in mRNA degradation. Catalyzes the phosphorolysis of single-stranded polyribonucleotides processively in the 3'- to 5'-direction. The chain is Polyribonucleotide nucleotidyltransferase from Salmonella typhi.